The following is a 348-amino-acid chain: Abnormal cell lineage protein 44 (348 aa).

Residues 1 to 25 (MRAAPFDFFFQSTALSTFFILCSLA) form the signal peptide. 11 cysteine pairs are disulfide-bonded: Cys-91/Cys-102, Cys-141/Cys-149, Cys-151/Cys-165, Cys-213/Cys-227, Cys-215/Cys-222, Cys-272/Cys-299, Cys-282/Cys-294, Cys-298/Cys-338, Cys-314/Cys-329, Cys-316/Cys-326, and Cys-321/Cys-322. The O-palmitoleoyl serine; by mom-1 moiety is linked to residue Ser-219. Residue Asn-286 is glycosylated (N-linked (GlcNAc...) asparagine).

The protein belongs to the Wnt family. In terms of processing, palmitoleoylation is required for efficient binding to frizzled receptors. Depalmitoleoylation leads to Wnt signaling pathway inhibition. As to expression, expressed in the tail hypodermis.

The protein resides in the secreted. It is found in the extracellular space. Its subcellular location is the extracellular matrix. Its function is as follows. Ligand for members of the frizzled family of seven transmembrane receptors. Affects male tail development, vulval precursor cell specification and egg laying. Involved in morphogenesis by influencing polarity of asymmetric cell divisions of the B, U, and F cells in the male, and the T cell in males and hermaphrodites. Controls spindle orientation in B-gamma cell division during male copulatory spicule development. Involved in specification of the P7.p lineage during vulval development. Has a role in providing polarity and default lin-17 localization in axon development and positioning of neuromuscular synapses in DA9 regions by negatively regulating synaptogenesis. Plays a role in motorneuron development by promoting the extension of the anterior neurite of ventral D-type GABAergic motorneurons along the anterior-posterior axis of the ventral nerve cord. Positively regulates cilium position and dendrite morphogenesis in postembryonic PQR gas-sensing neurons. This is likely through regulating the localization of grdn-1 to the distal dendrites of PQR sensory neurons. In Caenorhabditis elegans, this protein is Abnormal cell lineage protein 44.